Reading from the N-terminus, the 77-residue chain is Pi-stichotoxin-Hmg5a (77 aa).

The first 21 residues, 1–21 (MDYQRLLFLFAVAMVITTTVA), serve as a signal peptide directing secretion. Positions 22–34 (LPQDTALMDGQLQ) are excised as a propeptide. 3 cysteine pairs are disulfide-bonded: cysteine 40–cysteine 73, cysteine 42–cysteine 66, and cysteine 56–cysteine 74.

It belongs to the sea anemone type 3 (BDS) potassium channel toxin family.

It is found in the secreted. The protein localises to the nematocyst. Toxin that inhibits rat ASIC3 channels (IC(50)=13.8 uM). Also able to bind T.californica muscle-type nicotinic acetylcholine receptors (nAChR), and human alpha-7/CHRNA7 nicotinic acetylcholine receptors. The chain is Pi-stichotoxin-Hmg5a from Heteractis magnifica (Magnificent sea anemone).